Here is a 1098-residue protein sequence, read N- to C-terminus: Bifunctional helicase and thymine dioxygenase JBP2 (1098 aa).

The segment at 1-540 (MLNGLTRVST…PPLFVPTRLA (540 aa)) is thymine dioxygenase. 3 residues coordinate Fe cation: His415, Asp417, and His465. Position 479 (Arg479) interacts with 2-oxoglutarate. A DNA Helicase region spans residues 541–1098 (SHLAPVQLAA…RYQESVRESE (558 aa)). The Helicase ATP-binding domain occupies 555–730 (VERTEKQSGC…YRLVGWVNKG (176 aa)). Residue 568-575 (MTMGLGKT) coordinates ATP. The DEAH box motif lies at 681-684 (DEGH). Residues 897-1057 (VLVDIVLRVQ…ALPDELEDCA (161 aa)) enclose the Helicase C-terminal domain.

It in the C-terminal section; belongs to the SNF2/RAD54 helicase family. In the N-terminal section; belongs to the TET family. JBP2 subfamily. It depends on Fe(2+) as a cofactor.

Its subcellular location is the nucleus. It carries out the reaction ATP + H2O = ADP + phosphate + H(+). The enzyme catalyses thymine + 2-oxoglutarate + O2 = 5-hydroxymethyluracil + succinate + CO2. Dioxygenase that catalyzes the first step of DNA base J (beta-d-glucosyl-HOMedU) biosynthesis by converting thymine to 5-hydroxymethyluracil (HOMedU). DNA base J is a hypermodified thymidine residue found in the genome of kinetoplastid parasites, which is localized primarily to repetitive DNA, namely the telomeres, and is implicated in the regulation of antigenic variation. Probably also acts as a DNA helicase. Recognizes and binds specific regions of the genome, hydrolyzes ATP and allows the DNA base J de novo synthesis. Involved in initial synthesis of DNA base J, JBP1 being able to act via the basal level of DNA base J and propagate further synthesis. In contrast to JBP1, it does not specifically bind DNA base J, however it binds chromatin. This chain is Bifunctional helicase and thymine dioxygenase JBP2 (JBP2), found in Leishmania major.